An 860-amino-acid chain; its full sequence is Leucine--tRNA ligase (860 aa).

The 'HIGH' region signature appears at 42 to 52; it reads PYPSGRLHMGH. The 'KMSKS' region signature appears at 619-623; that stretch reads KMSKS. An ATP-binding site is contributed by K622.

It belongs to the class-I aminoacyl-tRNA synthetase family.

The protein resides in the cytoplasm. The catalysed reaction is tRNA(Leu) + L-leucine + ATP = L-leucyl-tRNA(Leu) + AMP + diphosphate. In Salmonella choleraesuis (strain SC-B67), this protein is Leucine--tRNA ligase.